We begin with the raw amino-acid sequence, 293 residues long: MPWIQMKMNTSGAQAEELGDALIENGAVSVTFQDTHDNPVFEPLPGETRLWGDTDVIGLFDAETDMADVIAGLEHHPLLGSGFHHKIEQIEDKDWEREWMTNFHPMRFGQRLWICPSWRDVPDPNAVNVMLDPGLAFGTGTHPTTALCLTWLDGLDLAGKTIIDFGCGSGILAIAALKLGAAAAIGIDIDPQAIQASRDNAERNGVSDRLSLYLPHQQPDNLIADVVVANILAGPLRELAPLISVLPKRGGHLGLSGVLASQASGVCEAYADLFELDAVAEKEEWCRITGVRR.

S-adenosyl-L-methionine-binding residues include Thr-145, Gly-166, Asp-188, and Asn-230.

This sequence belongs to the methyltransferase superfamily. PrmA family.

Its subcellular location is the cytoplasm. The catalysed reaction is L-lysyl-[protein] + 3 S-adenosyl-L-methionine = N(6),N(6),N(6)-trimethyl-L-lysyl-[protein] + 3 S-adenosyl-L-homocysteine + 3 H(+). In terms of biological role, methylates ribosomal protein L11. In Erwinia tasmaniensis (strain DSM 17950 / CFBP 7177 / CIP 109463 / NCPPB 4357 / Et1/99), this protein is Ribosomal protein L11 methyltransferase.